The following is a 284-amino-acid chain: 4-diphosphocytidyl-2-C-methyl-D-erythritol kinase (284 aa).

Residue Lys10 is part of the active site. 92-102 (PYGAGLGSGSS) lines the ATP pocket. Residue Asp134 is part of the active site.

It belongs to the GHMP kinase family. IspE subfamily.

The catalysed reaction is 4-CDP-2-C-methyl-D-erythritol + ATP = 4-CDP-2-C-methyl-D-erythritol 2-phosphate + ADP + H(+). Its pathway is isoprenoid biosynthesis; isopentenyl diphosphate biosynthesis via DXP pathway; isopentenyl diphosphate from 1-deoxy-D-xylulose 5-phosphate: step 3/6. Functionally, catalyzes the phosphorylation of the position 2 hydroxy group of 4-diphosphocytidyl-2C-methyl-D-erythritol. The sequence is that of 4-diphosphocytidyl-2-C-methyl-D-erythritol kinase from Salinibacter ruber (strain DSM 13855 / M31).